The primary structure comprises 464 residues: Protein FAM90A20 (464 aa).

Disordered regions lie at residues 16–42 (RAQT…DPRL), 71–213 (ATLG…IPRP), 228–247 (PTHS…ASKT), 254–273 (VRTQ…CPSA), 309–389 (RLGP…HDGA), and 418–437 (EKPG…SEAP). Basic and acidic residues-rich tracts occupy residues 74–83 (GKKEGKENLK) and 97–114 (NKDK…DPQR). Residues 180 to 197 (LASLSPLRKASLSSSSSL) show a composition bias toward low complexity.

The protein belongs to the FAM90 family.

The chain is Protein FAM90A20 from Homo sapiens (Human).